The chain runs to 338 residues: Fusarubin cluster-specific transcription factor fsr6 (338 aa).

Positions 16-44 (CDACTTAKVRCSRTHPCERCEDNGQAKEC) form a DNA-binding region, zn(2)-C6 fungal-type.

The protein localises to the nucleus. In terms of biological role, transcription factor that regulates the expression of the gene cluster that mediates the biosynthesis of fusarubins, highly pigmented naphthoquinones responsible for the coloration of the fruiting bodies. The chain is Fusarubin cluster-specific transcription factor fsr6 from Gibberella fujikuroi (strain CBS 195.34 / IMI 58289 / NRRL A-6831) (Bakanae and foot rot disease fungus).